The following is a 399-amino-acid chain: Elongation factor Tu (399 aa).

Residues 10 to 209 (KPHVNIGTIG…EVDAYIPTPV (200 aa)) enclose the tr-type G domain. The G1 stretch occupies residues 19-26 (GHVDHGKT). Position 19-26 (19-26 (GHVDHGKT)) interacts with GTP. Residue Thr26 coordinates Mg(2+). Residues 60 to 64 (GITIA) are G2. Residues 81 to 84 (DCPG) form a G3 region. GTP contacts are provided by residues 81 to 85 (DCPGH) and 136 to 139 (NKQD). Residues 136–139 (NKQD) form a G4 region. Positions 174-176 (SAL) are G5.

The protein belongs to the TRAFAC class translation factor GTPase superfamily. Classic translation factor GTPase family. EF-Tu/EF-1A subfamily. In terms of assembly, monomer.

It is found in the cytoplasm. The enzyme catalyses GTP + H2O = GDP + phosphate + H(+). Functionally, GTP hydrolase that promotes the GTP-dependent binding of aminoacyl-tRNA to the A-site of ribosomes during protein biosynthesis. This is Elongation factor Tu from Helicobacter acinonychis (strain Sheeba).